A 240-amino-acid polypeptide reads, in one-letter code: LexA repressor (240 aa).

The H-T-H motif DNA-binding region spans 26–46; it reads FDEMKEALDLASKSGIHRLIT. Catalysis depends on for autocatalytic cleavage activity residues Ser161 and Lys199.

This sequence belongs to the peptidase S24 family. In terms of assembly, homodimer.

The catalysed reaction is Hydrolysis of Ala-|-Gly bond in repressor LexA.. Its function is as follows. Represses a number of genes involved in the response to DNA damage (SOS response), including recA and lexA. In the presence of single-stranded DNA, RecA interacts with LexA causing an autocatalytic cleavage which disrupts the DNA-binding part of LexA, leading to derepression of the SOS regulon and eventually DNA repair. This Brucella melitensis biotype 1 (strain ATCC 23456 / CCUG 17765 / NCTC 10094 / 16M) protein is LexA repressor.